The sequence spans 916 residues: Protein translocase subunit SecA (916 aa).

ATP is bound by residues Gln-87, 105–109, and Asp-512; that span reads GEGKT. The interval 857 to 916 is disordered; sequence QHAEAPSMEQAVAGEDEELPEGPAPVVPLEPVRNEQKIGRNEPCPCGSGKKYKHCHGQLD. Zn(2+) is bound by residues Cys-900, Cys-902, Cys-911, and His-912. The segment covering 906–916 has biased composition (basic residues); that stretch reads KKYKHCHGQLD.

This sequence belongs to the SecA family. As to quaternary structure, monomer and homodimer. Part of the essential Sec protein translocation apparatus which comprises SecA, SecYEG and auxiliary proteins SecDF-YajC and YidC. Zn(2+) is required as a cofactor.

The protein localises to the cell inner membrane. Its subcellular location is the cytoplasm. The catalysed reaction is ATP + H2O + cellular proteinSide 1 = ADP + phosphate + cellular proteinSide 2.. Its function is as follows. Part of the Sec protein translocase complex. Interacts with the SecYEG preprotein conducting channel. Has a central role in coupling the hydrolysis of ATP to the transfer of proteins into and across the cell membrane, serving both as a receptor for the preprotein-SecB complex and as an ATP-driven molecular motor driving the stepwise translocation of polypeptide chains across the membrane. The protein is Protein translocase subunit SecA of Pseudomonas paraeruginosa (strain DSM 24068 / PA7) (Pseudomonas aeruginosa (strain PA7)).